The primary structure comprises 369 residues: Alanine racemase (369 aa).

Residue Lys35 is the Proton acceptor; specific for D-alanine of the active site. Lys35 bears the N6-(pyridoxal phosphate)lysine mark. Arg130 provides a ligand contact to substrate. Residue Tyr257 is the Proton acceptor; specific for L-alanine of the active site. Residue Met305 coordinates substrate.

This sequence belongs to the alanine racemase family. Requires pyridoxal 5'-phosphate as cofactor.

The catalysed reaction is L-alanine = D-alanine. The protein operates within amino-acid biosynthesis; D-alanine biosynthesis; D-alanine from L-alanine: step 1/1. Its function is as follows. Catalyzes the interconversion of L-alanine and D-alanine. May also act on other amino acids. The protein is Alanine racemase (alr) of Paracidovorax citrulli (strain AAC00-1) (Acidovorax citrulli).